The following is a 270-amino-acid chain: Putative envelope-preserving system protein Rv2743c (270 aa).

The next 2 helical transmembrane spans lie at 50 to 72 (ALRWGLVFTAGCLLWGLVTALLA) and 77 to 99 (FTSLLVITGTIAVTQAIPATLLL).

Interacts with PspA and Rv2742c.

The protein localises to the membrane. Involved in preservation of envelope integrity and tolerance to surface stress. Reverses the inhibitory effect of PspA on ClgR activity. Facilitates intracellular growth of M.tuberculosis. The protein is Putative envelope-preserving system protein Rv2743c of Mycobacterium tuberculosis (strain ATCC 25618 / H37Rv).